The sequence spans 117 residues: Protein Wnt-6 (117 aa).

Serine 1 carries the O-palmitoleoyl serine; by PORCN lipid modification. A disulfide bridge connects residues cysteine 83 and cysteine 98. An N-linked (GlcNAc...) asparagine glycan is attached at asparagine 84.

Belongs to the Wnt family. In terms of processing, palmitoleoylation is required for efficient binding to frizzled receptors. Depalmitoleoylation leads to Wnt signaling pathway inhibition.

It is found in the secreted. The protein resides in the extracellular space. The protein localises to the extracellular matrix. Ligand for members of the frizzled family of seven transmembrane receptors. Probable developmental protein. May be a signaling molecule which affects the development of discrete regions of tissues. Is likely to signal over only few cell diameters. The chain is Protein Wnt-6 (WNT-6) from Strongylocentrotus purpuratus (Purple sea urchin).